We begin with the raw amino-acid sequence, 379 residues long: MGERITLSVIKADIGGFVGHSSVHPRLLETAERYLAESKLLIDYRVAHVGDDIDLIMTHKYGVDCPEIHHLAWNVFLQCTEVARELKLYGAGQDLLSDAFSGNVKGMGPGVAEMEFEERKSEPIIVFAADKTEPGAWNLPLYKMFADPFNTIGLVIDPKMHQGFRFEVYDLIKNERVEFSLPEELYDLLVFIGAPGRYCIKSVYSKTTGEIAAVSSTQRLNLMAGRYVGKDDPVCIVRCQSGLPAVGEALEPFANPHLVAGWMRGSHIGPLMPVGLDQSAPTRFDGPPRVVAMGFQLSGGRLVGPQDFFGDVAFDKARQTANEIASYLRSLGPFEPHRLPLEDMEYTTMPEVMAKLKNRFVKVDHRDDREPAAEELGAK.

The active-site Proton acceptor; for FBP phosphatase activity is Asp-13. Asp-13, His-20, Asp-51, and Asp-52 together coordinate Mg(2+). Residue His-20 coordinates beta-D-fructose 1,6-bisphosphate. His-20 is a binding site for dihydroxyacetone phosphate. Tyr-89 contributes to the beta-D-fructose 1,6-bisphosphate binding site. Residue Gln-93 coordinates Mg(2+). A beta-D-fructose 1,6-bisphosphate-binding site is contributed by 102–103; the sequence is GN. A Mg(2+)-binding site is contributed by Asp-130. Lys-131 provides a ligand contact to beta-D-fructose 1,6-bisphosphate. Lys-131 contacts dihydroxyacetone phosphate. Tyr-227 acts as the Proton donor/acceptor; for FBP aldolase activity in catalysis. The Mg(2+) site is built by Lys-230, Asp-231, and Asp-232. Lys-230 acts as the Schiff-base intermediate with DHAP; for FBP aldolase activity in catalysis. Residues 240 to 241, Arg-264, Asp-285, and Tyr-346 each bind beta-D-fructose 1,6-bisphosphate; that span reads QS. 2 residues coordinate dihydroxyacetone phosphate: Arg-264 and Asp-285.

This sequence belongs to the FBP aldolase/phosphatase family. Homooctamer; dimer of tetramers. Mg(2+) serves as cofactor.

The enzyme catalyses beta-D-fructose 1,6-bisphosphate + H2O = beta-D-fructose 6-phosphate + phosphate. The catalysed reaction is beta-D-fructose 1,6-bisphosphate = D-glyceraldehyde 3-phosphate + dihydroxyacetone phosphate. It functions in the pathway carbohydrate biosynthesis; gluconeogenesis. In terms of biological role, catalyzes two subsequent steps in gluconeogenesis: the aldol condensation of dihydroxyacetone phosphate (DHAP) and glyceraldehyde-3-phosphate (GA3P) to fructose-1,6-bisphosphate (FBP), and the dephosphorylation of FBP to fructose-6-phosphate (F6P). This Moorella thermoacetica (strain ATCC 39073 / JCM 9320) protein is Fructose-1,6-bisphosphate aldolase/phosphatase.